The chain runs to 251 residues: MTINTCRETGLHRALKDYFSPRGSRQEVELRGSICDVVHPDGTIVEVQTSGLGRLEAKLKKLLPYHQVMVVYPVSRRLYIRMLNEDGSERHYRKSPKEGSFFQIYREIGRLHDLLDHEHLSLHIVYIHSEVIKVDDRKGRSRYKKPRIVDRKLLEVQSSEEFRNKGSLAQPLLSKLPEIFCCDDLAQTGTGVHCRYALRFLRRNGMATPHSKRGRTKLYRKEPPGDNRSPPPWQEPHGEGLAEKLSPGPAR.

The tract at residues 207 to 251 is disordered; it reads ATPHSKRGRTKLYRKEPPGDNRSPPPWQEPHGEGLAEKLSPGPAR.

This is an uncharacterized protein from Treponema pallidum (strain Nichols).